The sequence spans 376 residues: tRNA-specific 2-thiouridylase MnmA (376 aa).

Residues 16-23 (AMSGGVDS) and L42 contribute to the ATP site. The active-site Nucleophile is C111. The cysteines at positions 111 and 210 are disulfide-linked. An ATP-binding site is contributed by G135. The interaction with tRNA stretch occupies residues 158 to 160 (KDQ). Catalysis depends on C210, which acts as the Cysteine persulfide intermediate.

This sequence belongs to the MnmA/TRMU family.

It localises to the cytoplasm. The enzyme catalyses S-sulfanyl-L-cysteinyl-[protein] + uridine(34) in tRNA + AH2 + ATP = 2-thiouridine(34) in tRNA + L-cysteinyl-[protein] + A + AMP + diphosphate + H(+). Catalyzes the 2-thiolation of uridine at the wobble position (U34) of tRNA, leading to the formation of s(2)U34. This is tRNA-specific 2-thiouridylase MnmA from Streptomyces avermitilis (strain ATCC 31267 / DSM 46492 / JCM 5070 / NBRC 14893 / NCIMB 12804 / NRRL 8165 / MA-4680).